The chain runs to 1502 residues: G patch domain-containing protein 8 (1502 aa).

The 47-residue stretch at Ser-40 to Met-86 folds into the G-patch domain. The stretch at Asp-89 to Ala-124 forms a coiled coil. The segment at Phe-136–His-160 adopts a C2H2-type zinc-finger fold. The tract at residues Arg-172–Ser-251 is disordered. Residues Ser-182 to Ala-206 are compositionally biased toward basic and acidic residues. Positions Val-223–Asp-233 are enriched in acidic residues. Residue Lys-311 forms a Glycyl lysine isopeptide (Lys-Gly) (interchain with G-Cter in SUMO2) linkage. Basic and acidic residues-rich tracts occupy residues Ala-323–Ser-339 and Asn-424–Lys-436. Disordered stretches follow at residues Ala-323–Pro-391 and Gln-419–Leu-541. Residues Ser-459 to Glu-472 are compositionally biased toward polar residues. Lys-479 carries the N6-acetyllysine modification. Ser-491 bears the Phosphoserine mark. The span at Ser-491–Ala-519 shows a compositional bias: polar residues. Residue Lys-577 forms a Glycyl lysine isopeptide (Lys-Gly) (interchain with G-Cter in SUMO2) linkage. Composition is skewed to basic and acidic residues over residues Ser-579 to Val-623 and Ser-653 to Gly-670. Residues Ser-579–Ser-1301 are disordered. Ser-653 is modified (phosphoserine). Basic residues predominate over residues Lys-671–Lys-692. Over residues Ala-693 to Lys-707 the composition is skewed to basic and acidic residues. A compositionally biased stretch (basic residues) spans Ser-708–Lys-720. A compositionally biased stretch (pro residues) spans Pro-733–Pro-743. Residues Ser-738, Ser-740, and Ser-758 each carry the phosphoserine modification. The span at Ala-750–Gly-772 shows a compositional bias: basic and acidic residues. Composition is skewed to basic residues over residues Ala-799–His-809 and Ser-852–Arg-867. The segment covering Arg-868 to Asp-896 has biased composition (low complexity). Phosphoserine is present on residues Ser-911 and Ser-914. Residues Ser-919–Tyr-928 are compositionally biased toward basic residues. Phosphoserine is present on residues Ser-981, Ser-1009, Ser-1014, Ser-1033, and Ser-1035. Residues Trp-1010 to Arg-1027 show a composition bias toward basic and acidic residues. A compositionally biased stretch (basic and acidic residues) spans Gly-1042–Lys-1059. Ser-1081 bears the Phosphoserine mark. Basic and acidic residues-rich tracts occupy residues Leu-1093 to Val-1108 and Lys-1159 to Glu-1171. Lys-1105 is covalently cross-linked (Glycyl lysine isopeptide (Lys-Gly) (interchain with G-Cter in SUMO2)). Ser-1107 carries the phosphoserine modification. At Ser-1175 the chain carries Phosphoserine.

The protein is G patch domain-containing protein 8 (GPATCH8) of Homo sapiens (Human).